Consider the following 266-residue polypeptide: Amylovoran biosynthesis glycosyltransferase AmsE (266 aa).

The protein belongs to the glycosyltransferase 2 family.

It participates in glycan metabolism; exopolysaccharide biosynthesis. Its function is as follows. Involved in the biosynthesis of amylovoran which functions as a virulence factor. The sequence is that of Amylovoran biosynthesis glycosyltransferase AmsE (amsE) from Erwinia amylovora (Fire blight bacteria).